The following is a 517-amino-acid chain: Nicotine N-demethylase CYP82E4 (517 aa).

A helical membrane pass occupies residues 2-22 (LSPIEAIVGLVTFTFLFYFLW). Residue Lys254 forms a Glycyl lysine isopeptide (Lys-Gly) (interchain with G-Cter in ubiquitin) linkage. Cys457 lines the heme pocket.

It belongs to the cytochrome P450 family. CYP82E2 subfamily. The cofactor is heme. In terms of tissue distribution, expressed in leaves.

It localises to the membrane. The enzyme catalyses (S)-nicotine + reduced [NADPH--hemoprotein reductase] + O2 = (S)-nornicotine + formaldehyde + oxidized [NADPH--hemoprotein reductase] + H2O + H(+). Its pathway is alkaloid biosynthesis; nicotine biosynthesis. Involved in the biosynthesis of pyridine alkaloid natural products, leading mainly to the production of anabasine, anatabine, nicotine and nornicotine, effective deterrents against herbivores with antiparasitic and pesticide properties (neurotoxins); nornicotine serves as the precursor in the synthesis of the carcinogen compound N'-nitrosonornicotine (NNN). Catalyzes the demethylation of nicotine to form nornicotine. In Nicotiana tomentosiformis (Tobacco), this protein is Nicotine N-demethylase CYP82E4.